The following is a 406-amino-acid chain: Sorting nexin-6 (406 aa).

M1 bears the N-acetylmethionine mark. An N-acetylmethionine; in Sorting nexin-6, N-terminally processed modification is found at M2. The tract at residues 2-179 (MEGLDDGPDF…NQDLSVRGKN (178 aa)) is interaction with PIM1. In terms of domain architecture, PX spans 26–173 (LQSDAALQVD…HVFLEYNQDL (148 aa)). Residues 41-47 (SERDKVK), 100-106 (FDASREK), and 114-117 (EGSM) contribute to the a 1,2-diacyl-sn-glycero-3-phospho-(1D-myo-inositol-4,5-bisphosphate) site. S116 and S194 each carry phosphoserine. A membrane-binding amphipathic helix region spans residues 182 to 199 (EKLEDFFKNMVKSADGVI). In terms of domain architecture, BAR spans 203–406 (VKDVDDFFEH…NCLAVLNGDT (204 aa)).

Belongs to the sorting nexin family. Forms heterodimers with BAR domain-containing sorting nexins SNX1 and SNX2. The heterodimers are proposed to self-assemble into helical arrays on the membrane to stabilize and expand local membrane curvature underlying endosomal tubule formation. Thought to be a component of the originally described retromer complex (also called SNX-BAR retromer) which is a pentamer containing the heterotrimeric retromer cargo-selective complex (CSC), also described as vacuolar protein sorting subcomplex (VPS), and a heterodimeric membrane-deforming subcomplex formed between SNX1 or SNX2 and SNX5 or SNX6 (also called SNX-BAR subcomplex); the respective CSC and SNX-BAR subcomplexes associate with low affinity. Interacts with SNX1, SNX2, VPS26A, VPS29, VPS35, TGFB receptors, BACE1, BRMS1, PIP5K1C. Interacts with DCTN1; the association with DCTN1 is involved in movement of retromer-c ontaining vesicles toward the TGN. Interacts with PIM1; translocating SNX6 to the nucleus. Interacts with CDKN1B and GIT1. In vitro phosphorylated by PIM1; not affecting PIM1-dependent nuclear translocation.

It is found in the early endosome membrane. Its subcellular location is the cytoplasmic vesicle. The protein localises to the cytoplasm. The protein resides in the nucleus. In terms of biological role, involved in several stages of intracellular trafficking. Interacts with membranes phosphatidylinositol 3,4-bisphosphate and/or phosphatidylinositol 4,5-bisphosphate. Acts in part as component of the retromer membrane-deforming SNX-BAR subcomplex. The SNX-BAR retromer mediates retrograde transport of cargo proteins from endosomes to the trans-Golgi network (TGN) and is involved in endosome-to-plasma membrane transport for cargo protein recycling. The SNX-BAR subcomplex functions to deform the donor membrane into a tubular profile called endosome-to-TGN transport carrier (ETC). Does not have in vitro vesicle-to-membrane remodeling activity. Involved in retrograde endosome-to-TGN transport of lysosomal enzyme receptor IGF2R. May function as link between transport vesicles and dynactin. Negatively regulates retrograde transport of BACE1 from the cell surface to the trans-Golgi network. Involved in E-cadherin sorting and degradation; inhibits PIP5K1C-mediated E-cadherin degradation. In association with GIT1 involved in EGFR degradation. Promotes lysosomal degradation of CDKN1B. May contribute to transcription regulation. The sequence is that of Sorting nexin-6 (SNX6) from Pongo abelii (Sumatran orangutan).